The primary structure comprises 254 residues: MSEQNNSHGNLILLRHGQSEWNASNQFTGWVDVRLTEKGRAEAVRGGEMIKEAGLEPTILYTSLLRRAITTANIALDAADRHWIPVVRDWRLNERHYGALQGLNKAETKDKYGEEQFMAWRRSYDTPPPAIDADNEYAQTNDPRYADLSEIPATECLLDVVKRFIPYYEEEIEPRVKNGETVLVAAHGNSLRALVKHLDKISDEDIAGLNIPTGIPLVYNIDADGKVLNPGGDYLDPEAAAAGAAAVAAQGQAK.

Residues 15–22 (RHGQSEWN), 28–29 (TG), arginine 67, 94–97 (ERHY), lysine 105, 121–122 (RR), and 188–189 (GN) each bind substrate. The Tele-phosphohistidine intermediate role is filled by histidine 16. Catalysis depends on glutamate 94, which acts as the Proton donor/acceptor.

The protein belongs to the phosphoglycerate mutase family. BPG-dependent PGAM subfamily.

The enzyme catalyses (2R)-2-phosphoglycerate = (2R)-3-phosphoglycerate. Its pathway is carbohydrate degradation; glycolysis; pyruvate from D-glyceraldehyde 3-phosphate: step 3/5. Its function is as follows. Catalyzes the interconversion of 2-phosphoglycerate and 3-phosphoglycerate. This Corynebacterium jeikeium (strain K411) protein is 2,3-bisphosphoglycerate-dependent phosphoglycerate mutase.